A 129-amino-acid polypeptide reads, in one-letter code: Follitropin subunit beta (129 aa).

The first 18 residues, 1–18 (MKSVQFCFLFCCWRATCC), serve as a signal peptide directing secretion. 6 disulfides stabilise this stretch: Cys21/Cys69, Cys35/Cys84, Cys38/Cys122, Cys46/Cys100, Cys50/Cys102, and Cys105/Cys112. Asn25 and Asn42 each carry an N-linked (GlcNAc...) asparagine glycan.

Belongs to the glycoprotein hormones subunit beta family. In terms of assembly, heterodimer. The active follitropin is a heterodimer composed of an alpha chain/CGA shared with other hormones and a unique beta chain/FSHB shown here.

The protein resides in the secreted. Functionally, together with the alpha chain CGA constitutes follitropin, the follicle-stimulating hormone, and provides its biological specificity to the hormone heterodimer. Binds FSHR, a G protein-coupled receptor, on target cells to activate downstream signaling pathways. Follitropin is involved in follicle development and spermatogenesis in reproductive organs. The protein is Follitropin subunit beta (FSHB) of Cervus nippon (Sika deer).